The chain runs to 336 residues: MRIQADFSLDFPRAYGTLEASADFRTVPEDFQVTENLGFEPAGEGEHVYLWIEKRGENTAWVAEQLAVYAGVKPTDIGYAGRKDRHAITRQWFSVYLPLKSNHPEPEWQGFSSDRIQVLRVARHVRKLRRGEHESNHFVIGLRQLQCADKTAFHERLDCVLRSGVPNYFGEQRFGNAGRNLIEAESLLVGKKPYRDRQKRGLILSAARSYLFNQVLADRVRKGDWQISVAGEPCAYPSGPLWGRGRPLALVELLARETELLSSWRDWCNELEHVGTSQERRALLLAIKTPSYRWLVGDHLELAFTLEAGAFATSVLRELVSLNNQQLRLSGTESSD.

Asp-84 (nucleophile) is an active-site residue. The 135-residue stretch at 164–298 (GVPNYFGEQR…TPSYRWLVGD (135 aa)) folds into the TRUD domain.

The protein belongs to the pseudouridine synthase TruD family.

It carries out the reaction uridine(13) in tRNA = pseudouridine(13) in tRNA. In terms of biological role, responsible for synthesis of pseudouridine from uracil-13 in transfer RNAs. The polypeptide is tRNA pseudouridine synthase D (Cellvibrio japonicus (strain Ueda107) (Pseudomonas fluorescens subsp. cellulosa)).